A 711-amino-acid chain; its full sequence is Protein Smaug homolog 1 (711 aa).

Ser168 carries the phosphoserine modification. The interval 278–323 (ARGPQCLPSDHAPLSPQSSVASSGSGGSEHLEDQTTARNTFQEEGS) is disordered. Positions 323–396 (SGMKDVPAWL…LKSLERDIIE (74 aa)) constitute an SAM domain. A Phosphoserine modification is found at Ser420. 2 disordered regions span residues 422-448 (STTPEVRCREPSLMESPSPDCKDSAAA) and 565-588 (NRGFGQSNSLPTASSVGSGMGRRN). Thr424 bears the Phosphothreonine mark. Arg566 is subject to Omega-N-methylarginine. Positions 568–581 (FGQSNSLPTASSVG) are enriched in polar residues. Ser573 bears the Phosphoserine mark.

This sequence belongs to the SMAUG family. In terms of tissue distribution, expressed in brain (at protein level).

The protein localises to the cytoplasm. It is found in the cell projection. Its subcellular location is the dendrite. It localises to the synapse. The protein resides in the synaptosome. Its function is as follows. Acts as a translational repressor of SRE-containing messengers. This is Protein Smaug homolog 1 (Samd4a) from Mus musculus (Mouse).